We begin with the raw amino-acid sequence, 140 residues long: Transcription antitermination protein NusB (140 aa).

It belongs to the NusB family.

Its function is as follows. Involved in transcription antitermination. Required for transcription of ribosomal RNA (rRNA) genes. Binds specifically to the boxA antiterminator sequence of the ribosomal RNA (rrn) operons. The protein is Transcription antitermination protein NusB of Pseudothermotoga lettingae (strain ATCC BAA-301 / DSM 14385 / NBRC 107922 / TMO) (Thermotoga lettingae).